Here is a 70-residue protein sequence, read N- to C-terminus: Large ribosomal subunit protein bL31 (70 aa).

Zn(2+) contacts are provided by Cys-16, Cys-18, Cys-37, and Cys-40.

This sequence belongs to the bacterial ribosomal protein bL31 family. Type A subfamily. As to quaternary structure, part of the 50S ribosomal subunit. The cofactor is Zn(2+).

In terms of biological role, binds the 23S rRNA. The chain is Large ribosomal subunit protein bL31 from Shewanella frigidimarina (strain NCIMB 400).